The following is a 179-amino-acid chain: Inner membrane-spanning protein YciB (179 aa).

The next 5 membrane-spanning stretches (helical) occupy residues 3–23, 49–69, 76–96, 121–141, and 149–169; these read FLFD…FGIY, PMQW…ILLH, WKPT…VIGW, VAWA…AYQF, and FKLF…SIWL.

This sequence belongs to the YciB family.

It is found in the cell inner membrane. In terms of biological role, plays a role in cell envelope biogenesis, maintenance of cell envelope integrity and membrane homeostasis. This is Inner membrane-spanning protein YciB from Cupriavidus metallidurans (strain ATCC 43123 / DSM 2839 / NBRC 102507 / CH34) (Ralstonia metallidurans).